Consider the following 328-residue polypeptide: Surface antigen CRP170 (328 aa).

2 repeats span residues 38–102 (NAPC…CKKC) and 103–167 (NAPC…CKKC).

This chain is Surface antigen CRP170, found in Giardia intestinalis (Giardia lamblia).